The following is a 2283-amino-acid chain: AT-rich interactive domain-containing protein 1A (2283 aa).

Residues 1-10 (MAAQVAPAAA) show a composition bias toward low complexity. Disordered stretches follow at residues 1–333 (MAAQ…PADM), 346–822 (AAAA…LPNA), and 979–1006 (ATKM…TTTN). At Ala2 the chain carries N-acetylalanine. Residues 22-34 (ELKKAEQQQREEA) show a composition bias toward basic and acidic residues. A phosphoserine mark is found at Ser56 and Ser77. Residues 77–93 (SNGGGGGGGAGSGGGPG) are compositionally biased toward gly residues. Low complexity-rich tracts occupy residues 128 to 143 (SSSD…AAAA) and 233 to 266 (SSPR…SSSS). Ser234 carries the post-translational modification Phosphoserine. Residues 274–287 (AMGGGGPSAAGGGT) are compositionally biased toward gly residues. Thr287 is subject to Phosphothreonine. The LXXLL signature appears at 296–300 (LNQLL). Residues 296-307 (LNQLLTSPSSAR) are compositionally biased toward polar residues. At Ser302 the chain carries Phosphoserine. Residues 311 to 328 (GYPGGDYGGGPQDGGAGK) are compositionally biased toward gly residues. Phosphoserine is present on residues Ser365 and Ser384. The span at 402-427 (PYSQQQGPPSGPQQGHGYPGQPYGSQ) shows a compositional bias: low complexity. Residue Arg431 is modified to Asymmetric dimethylarginine. 2 stretches are compositionally biased toward polar residues: residues 438–451 (GRAQ…SYAQ) and 459–470 (QGPSAYGQQGQT). Composition is skewed to low complexity over residues 471–547 (PYYN…QHPQ) and 554–596 (QPQA…YSQQ). Ser605 is modified (phosphoserine). The segment covering 611 to 622 (SQASSAPSMTSS) has biased composition (low complexity). Residues 629–638 (MNLSLQSRPS) are compositionally biased toward polar residues. The span at 659 to 675 (SPGVSTSGISSSQGEQS) shows a compositional bias: low complexity. Over residues 676 to 686 (NPAQSPFSPHT) the composition is skewed to polar residues. Ser697, Ser699, Ser703, Ser731, Ser765, and Ser773 each carry phosphoserine. Composition is skewed to polar residues over residues 731–748 (SGQS…SSIA) and 756–794 (RNPQ…QNSM). Over residues 795–822 (GSYGPQGSQYGPQGGYPRQPNYNALPNA) the composition is skewed to low complexity. The ARID domain occupies 1018–1109 (EPERKMWVDR…CLYAFECKIE (92 aa)). Disordered regions lie at residues 1114–1484 (PPPD…MMGG) and 1539–1636 (RANH…PPMI). The span at 1142–1155 (MQGPQTPQSTSSSM) shows a compositional bias: low complexity. A compositionally biased stretch (pro residues) spans 1163–1178 (PPTPASTPHSQIPPLP). Ser1185 is modified (phosphoserine). Residues 1198–1220 (PTFQKRNSMTPNPGYQPSMNTSD) show a composition bias toward polar residues. Residue Ser1236 is modified to Phosphoserine. Arg1277 carries the omega-N-methylarginine modification. The span at 1343–1368 (QFSTQGTPSSSPFPSQQTTMYQQQQQ) shows a compositional bias: low complexity. The Nuclear localization signal motif lies at 1369-1388 (NYKRPMDGTYGPPAKRHEGE). The segment covering 1395-1426 (SAGQGQPQQQQLPAAQSQPASQPQAAQPSPQQ) has biased composition (low complexity). 2 stretches are compositionally biased toward polar residues: residues 1427–1436 (DVYNQYSNAY) and 1469–1478 (PGSSAQQNMP). Residues 1555–1579 (PYGPSAPVPPMTRPPPSNYQPPPSM) are compositionally biased toward pro residues. A Phosphoserine modification is found at Ser1605. Lys1613 carries the N6-acetyllysine modification. The short motif at 1710-1714 (LPGLL) is the LXXLL element. Disordered regions lie at residues 1757–1782 (PAHT…GVGN), 1872–1904 (CPTP…PEKR), and 1917–1941 (SSTL…PFGI). The segment covering 1761–1782 (EEEEEEHLDPKLEEEEEEGVGN) has biased composition (acidic residues). Thr1874 and Thr1886 each carry phosphothreonine. Positions 1882–1893 (TVEGTPGTTEQE) are enriched in low complexity. At Lys1903 the chain carries N6-acetyllysine. A compositionally biased stretch (basic and acidic residues) spans 1923-1935 (EGAKSAEATKESS). Phosphoserine occurs at positions 1927 and 1942. 2 consecutive short sequence motifs (LXXLL) follow at residues 1965–1969 (LCTLL) and 2083–2087 (LDGLL).

As to quaternary structure, component of SWI/SNF chromatin remodeling complexes, in some of which it can be mutually exclusive with ARID1B/BAF250B. The canonical complex contains a catalytic subunit (either SMARCA4/BRG1/BAF190A or SMARCA2/BRM/BAF190B) and at least SMARCE1, ACTL6A/BAF53, SMARCC1/BAF155, SMARCC2/BAF170, and SMARCB1/SNF5/BAF47. Other subunits specific to each of the complexes may also be present permitting several possible combinations developmentally and tissue specific. Component of the BAF (SWI/SNF-A) complex, which includes at least actin (ACTB), ARID1A/BAF250A, ARID1B/BAF250B, SMARCA2/BRM, SMARCA4/BRG1/BAF190A, ACTL6A/BAF53, ACTL6B/BAF53B, SMARCE1/BAF57, SMARCC1/BAF155, SMARCC2/BAF170, SMARCB1/SNF5/INI1, and one or more SMARCD1/BAF60A, SMARCD2/BAF60B, or SMARCD3/BAF60C. In muscle cells, the BAF complex also contains DPF3. Component of neural progenitors-specific chromatin remodeling complex (npBAF complex) composed of at least, ARID1A/BAF250A or ARID1B/BAF250B, SMARCD1/BAF60A, SMARCD3/BAF60C, SMARCA2/BRM/BAF190B, SMARCA4/BRG1/BAF190A, SMARCB1/BAF47, SMARCC1/BAF155, SMARCE1/BAF57, SMARCC2/BAF170, PHF10/BAF45A, ACTL6A/BAF53A and actin. Component of neuron-specific chromatin remodeling complex (nBAF complex) composed of at least, ARID1A/BAF250A or ARID1B/BAF250B, SMARCD1/BAF60A, SMARCD3/BAF60C, SMARCA2/BRM/BAF190B, SMARCA4/BRG1/BAF190A, SMARCB1/BAF47, SMARCC1/BAF155, SMARCE1/BAF57, SMARCC2/BAF170, DPF1/BAF45B, DPF3/BAF45C, ACTL6B/BAF53B and actin. Component of a SWI/SNF-like EBAFa complex, at least composed of SMARCA4/BRG1/BAF190A, SMARCB1/BAF47/SNF5, ACTL6A/BAF53A, SMARCE1/BAF57, SMARCD1/BAF60A, SMARCC1/BAF155, SMARCC2/BAF170, BAF250A and MLLT1/ENL. Interacts through its C-terminus with SMARCA2/BRM/BAF190B and SMARCA4/BRG1/BAF190A. Interacts with SMARCC1/BAF155. Interacts with FOS (via bZIP domain and leucine-zipper region), FOSB isoform 1 and 2, FOSL1 and FOSL2. In terms of tissue distribution, widely expressed. Expressed at high levels in the testis.

Its subcellular location is the nucleus. In terms of biological role, involved in transcriptional activation and repression of select genes by chromatin remodeling (alteration of DNA-nucleosome topology). Component of SWI/SNF chromatin remodeling complexes that carry out key enzymatic activities, changing chromatin structure by altering DNA-histone contacts within a nucleosome in an ATP-dependent manner. Binds DNA non-specifically. Belongs to the neural progenitors-specific chromatin remodeling complex (npBAF complex) and the neuron-specific chromatin remodeling complex (nBAF complex). During neural development a switch from a stem/progenitor to a postmitotic chromatin remodeling mechanism occurs as neurons exit the cell cycle and become committed to their adult state. The transition from proliferating neural stem/progenitor cells to postmitotic neurons requires a switch in subunit composition of the npBAF and nBAF complexes. As neural progenitors exit mitosis and differentiate into neurons, npBAF complexes which contain ACTL6A/BAF53A and PHF10/BAF45A, are exchanged for homologous alternative ACTL6B/BAF53B and DPF1/BAF45B or DPF3/BAF45C subunits in neuron-specific complexes (nBAF). The npBAF complex is essential for the self-renewal/proliferative capacity of the multipotent neural stem cells. The nBAF complex along with CREST plays a role regulating the activity of genes essential for dendrite growth. This is AT-rich interactive domain-containing protein 1A (Arid1a) from Mus musculus (Mouse).